We begin with the raw amino-acid sequence, 191 residues long: Gastrokine-3 (191 aa).

Residues 1-30 (MPLHSLERDNMRRLIAPSILVTVFLVPALA) form the signal peptide. The N-linked (GlcNAc...) asparagine glycan is linked to asparagine 33. A BRICHOS domain is found at 63–155 (NSVQSEWDGV…LCRAVPTYFA (93 aa)). The cysteines at positions 90 and 147 are disulfide-linked.

This sequence belongs to the gastrokine family. As to expression, expressed in stomach. Present in mucus cells at the base of antral glands, and Brunner glands of the duodenum. Present at lower levels in the mucus neck cell region of the fundus (at protein level).

It is found in the secreted. Its function is as follows. Inhibits gastric epithelial cell proliferation. This is Gastrokine-3 (Gkn3) from Mus musculus (Mouse).